Reading from the N-terminus, the 365-residue chain is Cytoplasmic tRNA 2-thiolation protein 1 (365 aa).

The protein belongs to the TtcA family. CTU1/NCS6/ATPBD3 subfamily.

The protein localises to the cytoplasm. It functions in the pathway tRNA modification; 5-methoxycarbonylmethyl-2-thiouridine-tRNA biosynthesis. Functionally, plays a central role in 2-thiolation of mcm(5)S(2)U at tRNA wobble positions of tRNA(Lys), tRNA(Glu) and tRNA(Gln). Directly binds tRNAs and probably acts by catalyzing adenylation of tRNAs, an intermediate required for 2-thiolation. It is unclear whether it acts as a sulfurtransferase that transfers sulfur from thiocarboxylated URM1 onto the uridine of tRNAs at wobble position. Prior mcm(5) tRNA modification by the elongator complex is required for 2-thiolation. May also be involved in protein urmylation. In Yarrowia lipolytica (strain CLIB 122 / E 150) (Yeast), this protein is Cytoplasmic tRNA 2-thiolation protein 1.